Reading from the N-terminus, the 373-residue chain is Pollen allergen KBG 31 (373 aa).

The N-terminal stretch at Met-1–Gln-28 is a signal peptide.

Belongs to the Poa p IX/Phl p VI allergen family. As to expression, pollen.

This chain is Pollen allergen KBG 31, found in Poa pratensis (Kentucky bluegrass).